Here is a 1024-residue protein sequence, read N- to C-terminus: MTMITDSLAVVLQRRDWENPGVTQLNRLAAHPPFASWRNSEEARTDRPSQQLRSLNGEWRFAWFPAPEAVPESWLECDLPDADTVVVPSNWQMHGYDAPIYTNVTYPITVNPPFVPAENPTGCYSLTFNIDESWLQEGQTRIIFDGVNSAFHLWCNGRWVGYGQDSRLPSEFDLSAFLRAGENRLAVMVLRWSDGSYLEDQDMWRMSGIFRDVSLLHKPTTQISDFQVTTRFNDDFSRAVLEAEVQMYGELRDELRVTVSLWQGETQVASGTAPFGGEIIDERGGYADRVTLRLNVENPELWSAEIPNLYRAVVELHTADGTLIEAEACDVGFREVRIENGLLLLNGKPLLIRGVNRHEHHPLHGQVMDEQTMVQDILLMKQNNFNAVRCSHYPNHPLWYTLCDRYGLYVVDEANIETHGMVPMNRLTDDPRWLPAMSERVTRMVQRDRNHPSVIIWSLGNESGHGANHDALYRWIKSVDPSRPVQYEGGGADTTATDIICPMYARVDEDQPFPAVPKWSIKKWLSLPGEMRPLILCEYAHAMGNSLGGFAKYWQAFRQYPRLQGGFVWDWVDQSLIKYDENGNPWSAYGGDFGDTPNDRQFCMNGLVFADRTPHPALTEAKHQQQFFQFRLSGRTIEVTSEYLFRHSDNEFLHWMVALDGKPLASGEVPLDVGPQGKQLIELPELPQPESAGQLWLTVRVVQPNATAWSEAGHISAWQQWRLAENLSVTLPSASHAIPQLTTSGTDFCIELGNKRWQFNRQSGFLSQMWIGDEKQLLTPLRDQFTRAPLDNDIGVSEATRIDPNAWVERWKAAGHYQAEAALLQCTADTLADAVLITTAHAWQHQGKTLFISRKTYRIDGHGEMVINVDVAVASDTPHPARVGLTCQLAQVAERVNWLGLGPQENYPDRLTAACFDRWDLPLSDMYTPYVFPSENGLRCGTRELNYGPHQWRGDFQFNISRYSQQQLMETSHRHLLHAEEGTWLNIDGFHMGIGGDDSWSPSVSAEFQLSAGHYHYQLVWCQK.

Substrate is bound by residues Asn103 and Asp202. Asp202 lines the Na(+) pocket. Residues Glu417, His419, and Glu462 each contribute to the Mg(2+) site. Residues Glu462 and 538 to 541 (EYAH) contribute to the substrate site. The active-site Proton donor is the Glu462. Glu538 functions as the Nucleophile in the catalytic mechanism. Residue Asn598 participates in Mg(2+) binding. Na(+) contacts are provided by Phe602 and Asn605. Residues Asn605 and Trp1000 each contribute to the substrate site.

It belongs to the glycosyl hydrolase 2 family. In terms of assembly, homotetramer. Mg(2+) serves as cofactor. It depends on Na(+) as a cofactor.

It catalyses the reaction Hydrolysis of terminal non-reducing beta-D-galactose residues in beta-D-galactosides.. This Escherichia coli O6:K15:H31 (strain 536 / UPEC) protein is Beta-galactosidase.